A 345-amino-acid polypeptide reads, in one-letter code: Beta-2-glycoprotein 1 (345 aa).

The N-terminal stretch at 1 to 19 (MVSPVLALFSAFLCHVAIA) is a signal peptide. Sushi domains lie at 21-81 (RICP…RCVP), 82-139 (RVCP…ACAR), 140-202 (ITCP…ECLE), and 203-262 (VKCP…TCRE). Disulfide bonds link cysteine 23-cysteine 66, cysteine 51-cysteine 79, cysteine 84-cysteine 124, cysteine 110-cysteine 137, cysteine 142-cysteine 188, cysteine 174-cysteine 200, cysteine 205-cysteine 248, cysteine 234-cysteine 260, cysteine 264-cysteine 315, cysteine 300-cysteine 325, and cysteine 307-cysteine 345. Threonine 33 carries an O-linked (GalNAc...) threonine glycan. N-linked (GlcNAc...) asparagine glycosylation is found at asparagine 105, asparagine 117, asparagine 162, asparagine 183, and asparagine 193. The segment at 263-345 (SCKLPVKKAT…KTDASELTPC (83 aa)) is sushi-like.

As to expression, expressed by the liver and secreted in plasma.

It is found in the secreted. Its function is as follows. Binds to various kinds of negatively charged substances such as heparin, phospholipids, and dextran sulfate. May prevent activation of the intrinsic blood coagulation cascade by binding to phospholipids on the surface of damaged cells. This Mus musculus (Mouse) protein is Beta-2-glycoprotein 1 (Apoh).